A 255-amino-acid polypeptide reads, in one-letter code: 5'-nucleotidase SurE (255 aa).

The a divalent metal cation site is built by aspartate 8, aspartate 9, serine 40, and asparagine 92.

It belongs to the SurE nucleotidase family. Requires a divalent metal cation as cofactor.

Its subcellular location is the cytoplasm. The catalysed reaction is a ribonucleoside 5'-phosphate + H2O = a ribonucleoside + phosphate. Nucleotidase that shows phosphatase activity on nucleoside 5'-monophosphates. The sequence is that of 5'-nucleotidase SurE from Brucella abortus (strain S19).